The sequence spans 599 residues: Nucleolar protein dnt1 (599 aa).

A Phosphoserine modification is found at Ser174. Disordered stretches follow at residues 210–262 (TQEE…PSRL) and 292–599 (DKSL…AALV). Residues 218-241 (QSFNSSLTPSQPTTYNRANFFSIN) are compositionally biased toward polar residues. Over residues 242–251 (DASSDSSSDA) the composition is skewed to low complexity. Residues 292 to 303 (DKSLRSSTREVS) are compositionally biased toward basic and acidic residues. Phosphoserine is present on Ser306. Positions 307 to 320 (PNEDSVNDDSSSDV) are enriched in acidic residues. The segment covering 321–333 (SDEKETEAKHEIR) has biased composition (basic and acidic residues). Over residues 344–354 (SHPSTAVPSEN) the composition is skewed to polar residues. Residues 364–380 (LSESSTTSISSSPSENS) show a composition bias toward low complexity. Positions 390–401 (DSPNKSLVNDNV) are enriched in polar residues. Residues 402–413 (SAKHDKESENGK) show a composition bias toward basic and acidic residues. The segment covering 421-431 (QTLVTTSTISA) has biased composition (polar residues). Positions 436–452 (PSDEIGSENDSDSDSDS) are enriched in acidic residues. Positions 456–480 (VPLSQLQKKSQQRNSVSHEIQNRGT) are enriched in polar residues. Over residues 483 to 500 (SPKEPKAKPSTERPETHR) the composition is skewed to basic and acidic residues. Residues 501 to 514 (TLSYSRLSELSKTF) show a composition bias toward polar residues. Phosphothreonine is present on Thr513. Composition is skewed to basic and acidic residues over residues 533–542 (ESKEEGRSDE) and 558–574 (NSEK…EKRA).

Post-translationally, phosphorylated by clp1.

It localises to the cytoplasm. The protein resides in the nucleus. The protein localises to the nucleolus. Its subcellular location is the cytoskeleton. It is found in the spindle. Its function is as follows. Negatively regulates the septation initiation network (SIN) pathway, independently of the cdc14 phosphatase clp1. May also have a role in silencing rDNA transcription. Required for maintaining the exclusive nucleolus localization of nuc1. The protein is Nucleolar protein dnt1 (dnt1) of Schizosaccharomyces pombe (strain 972 / ATCC 24843) (Fission yeast).